A 419-amino-acid polypeptide reads, in one-letter code: MNIIDELEWRGAIYQQTDEEGLRKWVEEKQISLYCGIDPSGDSMHIGHLIPFMILRRFQNAGHRPIILVGGATGTIGDPSGKKEERKLQSMEQISRNVESLRVQLGKIFDFEGDSAASMVNNYDWTKDVSILDFLRDYGKEFNVNTMLSKDIVASRLEVGISFTEFAYQILQAMDFNHLYEFNDCRLQIGGSDQWGNITAGLDLIRKKQGENAKAFGLTIPLLTKADGTKFGKSEGGAIWLNPEKTTPYEFYQFWINTDDRDVVKYLKYFTFLTETEIDELAKKVEEEPHLRAAQKTLAAEMTKFVHSEEALEQALKISKALFSGDVTALTADEIEQGFKDVPTFVAEDAEVNLVDWLVSLGIEPSKRQAREDVTNGAIYINGERQQNVEKVIDASDRIENKFTIVRRGKKKYFLVSYK.

L-tyrosine is bound at residue tyrosine 34. The 'HIGH' region motif lies at 39–48 (PSGDSMHIGH). L-tyrosine is bound by residues tyrosine 168 and glutamine 172. Positions 230–234 (KFGKS) match the 'KMSKS' region motif. Lysine 233 is a binding site for ATP. Residues 352 to 418 (VNLVDWLVSL…GKKKYFLVSY (67 aa)) enclose the S4 RNA-binding domain.

Belongs to the class-I aminoacyl-tRNA synthetase family. TyrS type 1 subfamily. As to quaternary structure, homodimer.

Its subcellular location is the cytoplasm. It catalyses the reaction tRNA(Tyr) + L-tyrosine + ATP = L-tyrosyl-tRNA(Tyr) + AMP + diphosphate + H(+). In terms of biological role, catalyzes the attachment of tyrosine to tRNA(Tyr) in a two-step reaction: tyrosine is first activated by ATP to form Tyr-AMP and then transferred to the acceptor end of tRNA(Tyr). This is Tyrosine--tRNA ligase from Listeria welshimeri serovar 6b (strain ATCC 35897 / DSM 20650 / CCUG 15529 / CIP 8149 / NCTC 11857 / SLCC 5334 / V8).